The primary structure comprises 341 residues: MSHKDEEDRGPWHGRIDVHEGPRALRWHQCVKMLAPEAPPGIVLLGFPCDLGVRRNHGRAGAAEGPAALRRTLANLAWHGEWPVYDAGDAGDVGASTHDAGEQTLETMQGDYARRITALLEAGHVPIGLGGGHEIAWAAWQGFAVHAIREPHPPRIGILNVDAHFDLRTAPAGNSGTPFRQIAADCGVRDWNFRYCVLGIAEAANTAALFDRARALGVAFRLDEEMGARDLDATASTVRDFLAGIDWLYLTLCLDALSGACAPGVSAPATIGVEPAVVEAVIRIAVASGKLRLADVAELNPSLDPDGRTARLAARLVWRLAREIARRPCDVRSGLHLPARD.

Mn(2+) is bound by residues His-133, Asp-162, His-164, Asp-166, Cys-253, and Asp-255.

It belongs to the arginase family. Requires Mn(2+) as cofactor.

It carries out the reaction N-formimidoyl-L-glutamate + H2O = formamide + L-glutamate. Its pathway is amino-acid degradation; L-histidine degradation into L-glutamate; L-glutamate from N-formimidoyl-L-glutamate (hydrolase route): step 1/1. Its function is as follows. Catalyzes the conversion of N-formimidoyl-L-glutamate to L-glutamate and formamide. This chain is Formimidoylglutamase, found in Aromatoleum aromaticum (strain DSM 19018 / LMG 30748 / EbN1) (Azoarcus sp. (strain EbN1)).